The chain runs to 815 residues: Phenylalanine--tRNA ligase beta subunit (815 aa).

Positions 39–148 (SKELQKFEVA…KDAVVGDNFT (110 aa)) constitute a tRNA-binding domain. The B5 domain occupies 421 to 496 (PQKKPLDFSV…RIYGYDKIES (76 aa)). Mg(2+) contacts are provided by aspartate 474, aspartate 480, glutamate 483, and glutamate 484. The FDX-ACB domain occupies 721–814 (SDYQANFRDY…ISQKFQGILR (94 aa)).

Belongs to the phenylalanyl-tRNA synthetase beta subunit family. Type 1 subfamily. In terms of assembly, tetramer of two alpha and two beta subunits. The cofactor is Mg(2+).

Its subcellular location is the cytoplasm. It catalyses the reaction tRNA(Phe) + L-phenylalanine + ATP = L-phenylalanyl-tRNA(Phe) + AMP + diphosphate + H(+). The protein is Phenylalanine--tRNA ligase beta subunit (pheT) of Rickettsia prowazekii (strain Madrid E).